Here is a 144-residue protein sequence, read N- to C-terminus: Aspartate carbamoyltransferase regulatory chain (144 aa).

4 residues coordinate Zn(2+): C103, C108, C132, and C135.

This sequence belongs to the PyrI family. Contains catalytic and regulatory chains. It depends on Zn(2+) as a cofactor.

Functionally, involved in allosteric regulation of aspartate carbamoyltransferase. This chain is Aspartate carbamoyltransferase regulatory chain, found in Clostridium tetani (strain Massachusetts / E88).